The primary structure comprises 439 residues: Capsid vertex component 1 (439 aa).

This sequence belongs to the herpesviridae CVC1 protein family. As to quaternary structure, interacts (via C-terminus) with capsid vertex component 2/CVC2.

Its subcellular location is the virion. The protein resides in the host nucleus. In terms of biological role, capsid vertex-specific component that plays a role during viral DNA encapsidation, assuring correct genome cleavage and presumably stabilizing capsids that contain full-length viral genomes. The sequence is that of Capsid vertex component 1 from Homo sapiens (Human).